Here is a 105-residue protein sequence, read N- to C-terminus: DNA-binding transcriptional regulator BolA (105 aa).

The protein belongs to the BolA/IbaG family.

Transcriptional regulator that plays an important role in general stress response. Has many effects on cell morphology, cell growth and cell division. Acts by regulating the transcription of many genes, including dacA (PBP-5), dacC (PBP-6), ampC and mreB. Probably involved in the coordination of genes that adapt the cell physiology in order to enhance cell adaptation and survival under stress conditions. Essential for normal cell morphology in stationary phase and under conditions of starvation. Also regulates a complex network of genes encoding proteins related to biofilm development, and negatively modulates flagellar biosynthesis and swimming capacity. Could be a motile/adhesive transcriptional switch, specifically involved in the transition between the planktonic and the attachment stage of biofilm formation. Overexpression produces round cell shape, impairs cell growth rate and induces biofilm development. The polypeptide is DNA-binding transcriptional regulator BolA (Escherichia coli (strain K12)).